The following is a 129-amino-acid chain: MLNFKFLKCVYLCFMVFVRLILIIKFRGKKFMNRKFVISLLFIILTFLLILGCDLSINNDRNKIDGASHFKKKYMDNLNYQCLSKKESEAKNSQIKLDENNNKNHFYSSRVSNVSNYYDRTHISCKKND.

2 helical membrane-spanning segments follow: residues 4 to 24 (FKFL…ILII) and 37 to 57 (VISL…DLSI).

It to B.burgdorferi BBF20.

The protein localises to the cell membrane. This is an uncharacterized protein from Borreliella burgdorferi (strain ATCC 35210 / DSM 4680 / CIP 102532 / B31) (Borrelia burgdorferi).